A 763-amino-acid chain; its full sequence is High glucose sensor RGT2 (763 aa).

Residues 1–28 (MNDSQNCLRQREENSHLNPGNDFGHHQG) are disordered. Residues 1-99 (MNDSQNCLRQ…PLPLRSNVMS (99 aa)) are Cytoplasmic-facing. The helical transmembrane segment at 100–120 (VLVGIFVAVGGFLFGYDTGLI) threads the bilayer. The Extracellular portion of the chain corresponds to 121–144 (NSITDMPYVKTYIAPNHSYFTTSQ). Asparagine 136 is a glycosylation site (N-linked (GlcNAc...) asparagine). The chain crosses the membrane as a helical span at residues 145 to 165 (IAILVSFLSLGTFFGALIAPY). Topologically, residues 166-175 (ISDSYGRKPT) are cytoplasmic. The helical transmembrane segment at 176–196 (IMFSTAVIFSIGNSLQVASGG) threads the bilayer. Leucine 197 is a topological domain (extracellular). The helical transmembrane segment at 198-218 (VLLIVGRVISGIGIGIISAVV) threads the bilayer. Residues 219 to 231 (PLYQAEAAQKNLR) lie on the Cytoplasmic side of the membrane. A helical membrane pass occupies residues 232–252 (GAIISSYQWAITIGLLVSSAV). The Extracellular segment spans residues 253–266 (SQGTHSKNGPSSYR). The chain crosses the membrane as a helical span at residues 267 to 287 (IPIGLQYVWSSILAVGMIFLP). Residues 288 to 357 (ESPRYYVLKD…SENRPKQILR (70 aa)) lie on the Cytoplasmic side of the membrane. Residues 358 to 378 (IFTGIAIQAFQQASGINFIFY) form a helical membrane-spanning segment. At 379-393 (YGVNFFNNTGVDNSY) the chain is on the extracellular side. N-linked (GlcNAc...) asparagine glycosylation occurs at asparagine 385. Residues 394-414 (LVSFISYAVNVAFSIPGMYLV) traverse the membrane as a helical segment. The Cytoplasmic portion of the chain corresponds to 415 to 421 (DRIGRRP). Residues 422 to 442 (VLLAGGVIMAIANLVIAIVGV) traverse the membrane as a helical segment. Residues 443-452 (SEGKTVVASK) lie on the Extracellular side of the membrane. Residues 453–473 (IMIAFICLFIAAFSATWGGVV) form a helical membrane-spanning segment. At 474 to 491 (WVVSAELYPLGVRSKCTA) the chain is on the cytoplasmic side. A helical membrane pass occupies residues 492 to 512 (ICAAANWLVNFTCALITPYIV). The Extracellular segment spans residues 513 to 524 (DVGSHTSSMGPK). A helical membrane pass occupies residues 525-545 (IFFIWGGLNVVAVIVVYFAVY). Residues 546–763 (ETRGLTLEEI…SKHSQYTSPQ (218 aa)) lie on the Cytoplasmic side of the membrane. The segment covering 725–737 (SSTTSNDTSFSPS) has biased composition (low complexity). Residues 725 to 763 (SSTTSNDTSFSPSHNSNARTSSNWTSDLASKHSQYTSPQ) form a disordered region. Residues 738–763 (HNSNARTSSNWTSDLASKHSQYTSPQ) show a composition bias toward polar residues.

Belongs to the major facilitator superfamily. Sugar transporter (TC 2.A.1.1) family. Interacts with YCK1. Interacts with MTH1 and STD1. Phosphorylated in the C-terminal tail on Yck consensus sites in a yeast casein kinases YCK1 and YCK2 (Yck)-dependent manner. This phosphorylation is required for interaction with HXT corepressors MTH1 and STD1 and ultimately HXT expression.

The protein resides in the cell membrane. Functionally, low-affinity high glucose sensor that is part of the sensor/receptor-repressor (SSR) glucose-signaling pathway, which detects extracellular glucose and induces expression of glucose transporters that bring glucose into the cell. The transporter-like sensor generates an intracellular signal in the presence of high levels of glucose to promote high glucose-induced expression of HXT1. Binding of glucose to the RGT2 transmembrane domain activates a downstream signaling cascade, leading to phosphorylation of the RGT1 corepressors MTH1 and STD1, targeting them for SCF(Grr1)-dependent ubiquitination and degradation. Depletion of the corepressors robs RGT1 of its ability to repress expression of HXT genes, leading to accumulation of glucose transporters in the plasma membrane. Even though RGT2 is similar to glucose transporters, it appears to be unable to transport glucose. The chain is High glucose sensor RGT2 from Saccharomyces cerevisiae (strain ATCC 204508 / S288c) (Baker's yeast).